The sequence spans 269 residues: uncharacterized protein (269 aa).

The disordered stretch occupies residues 1-21; it reads MAYSSSNSDIEDDSSKSNSNL.

This is an uncharacterized protein from Homo sapiens (Human).